A 352-amino-acid polypeptide reads, in one-letter code: Divinyl chlorophyll a/b light-harvesting protein PcbH (352 aa).

Helical transmembrane passes span 27 to 47 (FIGS…ASCL), 88 to 108 (VATI…AGLA), 140 to 160 (FILG…VEWA), 202 to 222 (VMSG…FHIA), 242 to 262 (AVLS…AFWA), and 309 to 329 (LVNV…WHAL).

This sequence belongs to the PsbB/PsbC family. IsiA/Pcb subfamily. The antenna complex consists of divinyl chlorophylls (a and b) and divinyl chlorophyll a/b binding proteins and binds more divinyl chlorophyll b than does the antenna complex from high-light-adapted Prochlorococcus. Requires divinyl chlorophyll a as cofactor. It depends on divinyl chlorophyll b as a cofactor.

The protein localises to the cellular thylakoid membrane. In terms of biological role, the antenna complex functions as a light receptor, it captures and delivers excitation energy to photosystems II and I. The Prochlorales pcb genes are not related to higher plant LHCs. The sequence is that of Divinyl chlorophyll a/b light-harvesting protein PcbH (pcbH) from Prochlorococcus marinus (strain SARG / CCMP1375 / SS120).